The sequence spans 92 residues: Protein S100-A5 (92 aa).

2 consecutive EF-hand domains span residues 12 to 47 and 47 to 82; these read MVTT…LGEM and MKES…LCMA. Ca(2+) is bound by residues T28, E33, D60, N62, D64, E66, and E71.

It belongs to the S-100 family. In terms of assembly, homodimer.

Binds calcium, zinc and copper. One subunit can simultaneously bind 2 calcium ions or 2 copper ions plus 1 zinc ion. Calcium and copper ions compete for the same binding sites. This Homo sapiens (Human) protein is Protein S100-A5 (S100A5).